The following is a 351-amino-acid chain: Fe(3+) ions import ATP-binding protein FbpC (351 aa).

The 231-residue stretch at 9 to 239 (LVLKNINKTF…PNSLFLANFM (231 aa)) folds into the ABC transporter domain. An ATP-binding site is contributed by 41–48 (GPSGCGKT).

The protein belongs to the ABC transporter superfamily. Fe(3+) ion importer (TC 3.A.1.10) family. The complex is composed of two ATP-binding proteins (FbpC), two transmembrane proteins (FbpB) and a solute-binding protein (FbpA).

The protein resides in the cell inner membrane. The enzyme catalyses Fe(3+)(out) + ATP + H2O = Fe(3+)(in) + ADP + phosphate + H(+). Functionally, part of the ABC transporter complex FbpABC involved in Fe(3+) ions import. Responsible for energy coupling to the transport system. The chain is Fe(3+) ions import ATP-binding protein FbpC from Mannheimia succiniciproducens (strain KCTC 0769BP / MBEL55E).